The primary structure comprises 251 residues: Capsid protein (251 aa).

Residues 1–35 (MPKRDAPWRHMAGTSKVSRSGNYSPSGGMGSKSNK) form a disordered region. A Bipartite nuclear localization signal motif is present at residues 3–20 (KRDAPWRHMAGTSKVSRS). Residues 15 to 35 (SKVSRSGNYSPSGGMGSKSNK) are compositionally biased toward polar residues. The short motif at 35–49 (KANAWVNRPMYRKPR) is the Nuclear localization signal element. Residues 54 to 71 (YKSPDVPKGCEGPCKVQS) fold into a zinc finger. Residues 96–117 (ITHRVGKRFCVKSVYILGKIWM) carry the Nuclear export signal motif. Residues 195-242 (RRFWKVNNHVVYNHQEAGKYENHTENALLLYMACTHASNPVYATLKIR) carry the Bipartite nuclear localization signal motif.

Belongs to the geminiviridae capsid protein family. In terms of assembly, homomultimer. Binds to single-stranded and double-stranded viral DNA. Interacts (via nuclear localization signals) with host importin alpha-1a.

It is found in the virion. Its subcellular location is the host nucleus. Functionally, encapsidates the viral DNA into characteristic twinned ('geminate') particles. Binds the genomic viral ssDNA and shuttles it into and out of the cell nucleus. The CP of bipartite geminiviruses is not required for cell-to-cell or systemic movement. This chain is Capsid protein, found in Macroptilium lathyroides (Lima bean).